The primary structure comprises 476 residues: Calcitonin gene-related peptide type 1 receptor (476 aa).

Residues 1-33 (METLQMGLLSRSALFKYIIIFLIMINTRGYVLA) form the signal peptide. At 34–154 (SQEQEAKTSV…FTHEKVKTAL (121 aa)) the chain is on the extracellular side. 3 disulfides stabilise this stretch: C63–C89, C80–C120, and C103–C142. 3 N-linked (GlcNAc...) asparagine glycosylation sites follow: N81, N133, and N138. Residues 155–179 (NLYYLTIIGHGLSIASLLISLGIFF) traverse the membrane as a helical segment. The Cytoplasmic portion of the chain corresponds to 180–190 (YFKNLSCQRIT). A helical membrane pass occupies residues 191–213 (LHKNLFFSFVCNSIITIISLSAV). Residues 214-224 (ANNQALVATNP) are Extracellular-facing. The chain crosses the membrane as a helical span at residues 225–253 (VICKISQFIHLYLMGCNYFWMLCEGIYLH). Residues 254–267 (TLIVVAVFAEKQHL) are Cytoplasmic-facing. The helical transmembrane segment at 268 to 288 (MWYYLLGWGFPLIPACIHAVA) threads the bilayer. The Extracellular portion of the chain corresponds to 289-304 (RSLYYNDNCWISSETH). The helical transmembrane segment at 305-329 (LLYIIHGPICAALLVNLFFLLNIVR) threads the bilayer. Residues 330–344 (VLITKLKVTHQAESN) are Cytoplasmic-facing. Residues 345–366 (LYMKAVRATLILVPLLGIEFVL) traverse the membrane as a helical segment. The Extracellular segment spans residues 367–381 (FPWKPEGRIAEEIYD). The chain crosses the membrane as a helical span at residues 382-402 (YVMHILMHYQGLLVATIFCFF). The Cytoplasmic segment spans residues 403–476 (NGEVQAVLKR…VFFKTEKQYM (74 aa)).

It belongs to the G-protein coupled receptor 2 family.

The protein resides in the cell membrane. Functionally, may function as G protein-coupled receptor for calcitonin-gene-related peptides and adrenomedullin. Specificity may be modulated by accessory proteins. May activate cAMP-dependent pathway. In Xenopus laevis (African clawed frog), this protein is Calcitonin gene-related peptide type 1 receptor (calcrl).